A 221-amino-acid chain; its full sequence is Small histidine-alanine-rich protein (221 aa).

Positions 1–21 (MVSFSKNKILSAAVFASVLLL) are cleaved as a signal peptide. Basic and acidic residues predominate over residues 52-67 (AHAGDAHHAHHVADAH). Disordered regions lie at residues 52–141 (AHAG…AANA) and 180–221 (AHHD…HLHH). 2 tandem repeats follow at residues 57–59 (AHH) and 60–62 (AHH). The 4 X 3 AA approximate tandem repeats of A-H-H stretch occupies residues 57 to 68 (AHHAHHVADAHH). A 1-3; approximate repeat occupies 63–65 (VAD). A run of 13 repeats spans residues 66–68 (AHH), 69–74 (AHHAAN), 75–80 (AHHAAN), 81–86 (AHHAAN), 87–92 (AHHAAN), 93–98 (AHHAAN), 99–104 (AHHAAN), 105–110 (AHHAAN), 111–116 (AHHAAN), 117–122 (AHHAAN), 123–128 (AHHAAN), 129–134 (AHHAAN), and 135–140 (AHHAAN). A 13 X 6 AA approximate tandem repeats of A-H-H-A-A-N region spans residues 69-146 (AHHAANAHHA…HAANAHHAAD (78 aa)). Residues 75–141 (AHHAANAHHA…AANAHHAANA (67 aa)) show a composition bias toward low complexity. Residues 141–146 (AHHAAD) form a 2-13; approximate repeat. A run of 7 repeats spans residues 176–180 (HHDDA), 181–185 (HHDGA), 186–190 (HHDDA), 191–195 (HHDGA), 196–200 (HHDGA), 201–205 (HHDGA), and 206–210 (HHDGA). The interval 176–210 (HHDDAHHDGAHHDDAHHDGAHHDGAHHDGAHHDGA) is 7 X 5 AA tandem repeats of H-H-D-[DG]-A. Over residues 180–211 (AHHDGAHHDDAHHDGAHHDGAHHDGAHHDGAH) the composition is skewed to basic and acidic residues.

The chain is Small histidine-alanine-rich protein from Plasmodium falciparum (isolate FC27 / Papua New Guinea).